The following is a 1043-amino-acid chain: Isoleucine--tRNA ligase (1043 aa).

A 'HIGH' region motif is present at residues 49 to 59 (PFATGLPHYGH). The 'KMSKS' region motif lies at 592–596 (KMSKR). Lys595 contributes to the ATP binding site.

It belongs to the class-I aminoacyl-tRNA synthetase family. IleS type 2 subfamily. Monomer. Zn(2+) serves as cofactor.

The protein resides in the cytoplasm. The enzyme catalyses tRNA(Ile) + L-isoleucine + ATP = L-isoleucyl-tRNA(Ile) + AMP + diphosphate. Functionally, catalyzes the attachment of isoleucine to tRNA(Ile). As IleRS can inadvertently accommodate and process structurally similar amino acids such as valine, to avoid such errors it has two additional distinct tRNA(Ile)-dependent editing activities. One activity is designated as 'pretransfer' editing and involves the hydrolysis of activated Val-AMP. The other activity is designated 'posttransfer' editing and involves deacylation of mischarged Val-tRNA(Ile). This is Isoleucine--tRNA ligase from Chlamydia caviae (strain ATCC VR-813 / DSM 19441 / 03DC25 / GPIC) (Chlamydophila caviae).